A 393-amino-acid polypeptide reads, in one-letter code: Formate-dependent phosphoribosylglycinamide formyltransferase (393 aa).

N(1)-(5-phospho-beta-D-ribosyl)glycinamide is bound by residues 22–23 (EL) and E82. Residues R114, K155, 160–165 (SSGKGQ), 195–198 (EGFI), and E203 each bind ATP. In terms of domain architecture, ATP-grasp spans 119–308 (RLAAEELDLP…QFALHARAIL (190 aa)). 2 residues coordinate Mg(2+): E267 and E279. Residues D286, K356, and 363-364 (RR) contribute to the N(1)-(5-phospho-beta-D-ribosyl)glycinamide site.

It belongs to the PurK/PurT family. In terms of assembly, homodimer.

It catalyses the reaction N(1)-(5-phospho-beta-D-ribosyl)glycinamide + formate + ATP = N(2)-formyl-N(1)-(5-phospho-beta-D-ribosyl)glycinamide + ADP + phosphate + H(+). It participates in purine metabolism; IMP biosynthesis via de novo pathway; N(2)-formyl-N(1)-(5-phospho-D-ribosyl)glycinamide from N(1)-(5-phospho-D-ribosyl)glycinamide (formate route): step 1/1. Functionally, involved in the de novo purine biosynthesis. Catalyzes the transfer of formate to 5-phospho-ribosyl-glycinamide (GAR), producing 5-phospho-ribosyl-N-formylglycinamide (FGAR). Formate is provided by PurU via hydrolysis of 10-formyl-tetrahydrofolate. The polypeptide is Formate-dependent phosphoribosylglycinamide formyltransferase (Pseudomonas fluorescens (strain Pf0-1)).